Consider the following 346-residue polypeptide: Phosphate acyltransferase (346 aa).

This sequence belongs to the PlsX family. Homodimer. Probably interacts with PlsY.

It is found in the cytoplasm. It carries out the reaction a fatty acyl-[ACP] + phosphate = an acyl phosphate + holo-[ACP]. It functions in the pathway lipid metabolism; phospholipid metabolism. Its function is as follows. Catalyzes the reversible formation of acyl-phosphate (acyl-PO(4)) from acyl-[acyl-carrier-protein] (acyl-ACP). This enzyme utilizes acyl-ACP as fatty acyl donor, but not acyl-CoA. The polypeptide is Phosphate acyltransferase (Psychromonas ingrahamii (strain DSM 17664 / CCUG 51855 / 37)).